The sequence spans 359 residues: DNA polymerase IV (359 aa).

The 181-residue stretch at 6 to 186 folds into the UmuC domain; it reads IIHVDMDAFY…LPIEAFWGVG (181 aa). Mg(2+) is bound by residues Asp10 and Asp104. Glu105 is a catalytic residue.

Belongs to the DNA polymerase type-Y family. As to quaternary structure, monomer. Mg(2+) serves as cofactor.

The protein resides in the cytoplasm. The enzyme catalyses DNA(n) + a 2'-deoxyribonucleoside 5'-triphosphate = DNA(n+1) + diphosphate. Its function is as follows. Poorly processive, error-prone DNA polymerase involved in untargeted mutagenesis. Copies undamaged DNA at stalled replication forks, which arise in vivo from mismatched or misaligned primer ends. These misaligned primers can be extended by PolIV. Exhibits no 3'-5' exonuclease (proofreading) activity. May be involved in translesional synthesis, in conjunction with the beta clamp from PolIII. This is DNA polymerase IV from Akkermansia muciniphila (strain ATCC BAA-835 / DSM 22959 / JCM 33894 / BCRC 81048 / CCUG 64013 / CIP 107961 / Muc).